Consider the following 83-residue polypeptide: Subtilisin-chymotrypsin inhibitor CI-1B (83 aa).

Residues 1-28 (MRSMEGSVPKYPEPTEGSIGASGAKRSW) are disordered.

The protein belongs to the protease inhibitor I13 (potato type I serine protease inhibitor) family.

Inhibits both subtilisin and chymotrypsin. The polypeptide is Subtilisin-chymotrypsin inhibitor CI-1B (Hordeum vulgare (Barley)).